A 234-amino-acid chain; its full sequence is MTLLYEGKAKRIFSTNQENELRVEYKDEVTAGNGAKKDTMAGKGRLNNQITSIIFKYLQENGIESHFIKQLSETEQLVKPVKIIPLEVVVRNIASGSITKRLGFENGEVFREPLVEFFYKNDALNDPLITDDHIKLLNIATDKDIETLKTKALEINQVLKQLMHAMSLKLVDFKIEFGKTETGQILLADEISPDTCRIWDKATNANFDKDVYRNNTGSLIETYQIFLNKLEDLK.

Belongs to the SAICAR synthetase family.

It carries out the reaction 5-amino-1-(5-phospho-D-ribosyl)imidazole-4-carboxylate + L-aspartate + ATP = (2S)-2-[5-amino-1-(5-phospho-beta-D-ribosyl)imidazole-4-carboxamido]succinate + ADP + phosphate + 2 H(+). It participates in purine metabolism; IMP biosynthesis via de novo pathway; 5-amino-1-(5-phospho-D-ribosyl)imidazole-4-carboxamide from 5-amino-1-(5-phospho-D-ribosyl)imidazole-4-carboxylate: step 1/2. The polypeptide is Phosphoribosylaminoimidazole-succinocarboxamide synthase (Staphylococcus aureus (strain MRSA252)).